The sequence spans 179 residues: Large ribosomal subunit protein uL5 (179 aa).

It belongs to the universal ribosomal protein uL5 family. Part of the 50S ribosomal subunit; part of the 5S rRNA/L5/L18/L25 subcomplex. Contacts the 5S rRNA and the P site tRNA. Forms a bridge to the 30S subunit in the 70S ribosome.

In terms of biological role, this is one of the proteins that bind and probably mediate the attachment of the 5S RNA into the large ribosomal subunit, where it forms part of the central protuberance. In the 70S ribosome it contacts protein S13 of the 30S subunit (bridge B1b), connecting the 2 subunits; this bridge is implicated in subunit movement. Contacts the P site tRNA; the 5S rRNA and some of its associated proteins might help stabilize positioning of ribosome-bound tRNAs. In Herminiimonas arsenicoxydans, this protein is Large ribosomal subunit protein uL5.